A 262-amino-acid chain; its full sequence is Trypsin eta (262 aa).

A signal peptide spans 1–22 (MNKVILRILAVLFLLGIYAVSA). Residues 23–27 (QSDGR) constitute a propeptide, activation peptide. Residues 28 to 259 (IVGGADTSSY…YKDWIAKQRT (232 aa)) enclose the Peptidase S1 domain. Residues Cys-59 and Cys-75 are joined by a disulfide bond. Residues His-74 and Asp-120 each act as charge relay system in the active site. Disulfide bonds link Cys-185/Cys-200 and Cys-211/Cys-235. Residue Ser-215 is the Charge relay system of the active site.

Belongs to the peptidase S1 family.

It localises to the secreted. It is found in the extracellular space. It carries out the reaction Preferential cleavage: Arg-|-Xaa, Lys-|-Xaa.. The polypeptide is Trypsin eta (etaTry) (Drosophila melanogaster (Fruit fly)).